The chain runs to 309 residues: Elongation factor Ts (309 aa).

Residues 82–85 (TDFV) form an involved in Mg(2+) ion dislocation from EF-Tu region.

It belongs to the EF-Ts family.

The protein resides in the cytoplasm. In terms of biological role, associates with the EF-Tu.GDP complex and induces the exchange of GDP to GTP. It remains bound to the aminoacyl-tRNA.EF-Tu.GTP complex up to the GTP hydrolysis stage on the ribosome. This chain is Elongation factor Ts (tsf), found in Rickettsia prowazekii (strain Madrid E).